The following is a 128-amino-acid chain: Glycine cleavage system H protein (128 aa).

The region spanning Val24 to Lys106 is the Lipoyl-binding domain. Lys65 bears the N6-lipoyllysine mark.

The protein belongs to the GcvH family. As to quaternary structure, the glycine cleavage system is composed of four proteins: P, T, L and H. Requires (R)-lipoate as cofactor.

Its function is as follows. The glycine cleavage system catalyzes the degradation of glycine. The H protein shuttles the methylamine group of glycine from the P protein to the T protein. The sequence is that of Glycine cleavage system H protein from Yersinia pseudotuberculosis serotype O:1b (strain IP 31758).